Here is a 493-residue protein sequence, read N- to C-terminus: MFDGRNSGHSSFSSRGDGMHTPEHELAGHAAPSTRRGKQNRRSDMEVMKERFAKLLLGEDMSGGGTGETSALALSNAITKLADSMFGEQMKLQPMYPETKENWRKEMGWLLSVIDHIVQFVPSRQMGKNGQFTEIMVTKQRDDLLTNIPALRKLDSVLLETLDNFKDQKDFWYVPRDMEDADHNGDWRRDENWWLPVVKVPTDGLSEESRRWLQNQKDSVAQVLKAATAINAHVLSEMHVPENYIDSLPKNGKTSLGDFLYKSITEESFDPDYFVSFLDLSTEHKVLDLKNRIEASMVIWKRKMCQKEKDGKSQWGSTVSLEKRELFEVRAETILVMLKQQFPGIPQSSLEVSKIKNNKDVGQAILESYSRVLESLASKIMSRIEDVLEADRLVQRQLMGEAETRSESEAESEYEETEKVVAAETPNSRKLSDFIGWRLSSDTKKHSSMSDIEFFHKVEQEKEKPMMKSPRALPKKFSYLAKLENMRSPSDRH.

2 disordered regions span residues Met-1–Met-45 and Gly-400–Ala-423. Positions Asp-17–Ala-27 are enriched in basic and acidic residues. Residues Arg-35 to Glu-401 enclose the PRONE domain.

In terms of biological role, guanine-nucleotide exchange factor (GEF) that acts as an activator of Rop (Rho of plants) GTPases by promoting the exchange of GDP for GTP. This is Rop guanine nucleotide exchange factor 10 (ROPGEF10) from Arabidopsis thaliana (Mouse-ear cress).